The following is an 886-amino-acid chain: Phycobiliprotein ApcE (886 aa).

C187 contacts (2R,3E)-phycocyanobilin. PBS-linker domains lie at 244 to 424 (DLQG…FRKV), 496 to 678 (QVRP…ISSK), and 695 to 876 (NDIQ…SVVV).

This sequence belongs to the phycobilisome linker protein family. Post-translationally, contains one covalently linked bilin chromophore. This protein autochromophorylates (Potential).

It is found in the plastid. Its subcellular location is the chloroplast thylakoid membrane. Its function is as follows. This protein is postulated to act both as terminal energy acceptor and as a linker polypeptide that stabilizes the phycobilisome architecture. May have intrinsic bilin lyase activity. This Porphyra purpurea (Red seaweed) protein is Phycobiliprotein ApcE (apcE).